The sequence spans 424 residues: Protein maelstrom 1 (424 aa).

Positions 2 to 69 form a DNA-binding region, HMG box; that stretch reads PPKKHSGFMM…LTRVKKERLN (68 aa).

It belongs to the maelstrom family.

The protein resides in the cytoplasm. It localises to the nucleus. Its function is as follows. Involved both in the piRNA and miRNA metabolic processes. As a component of the meiotic nuage, plays a central role during oogenesis by repressing transposable elements and preventing their mobilization, which is essential for the germline integrity. Repression of transposable elements is mediated via the piRNA metabolic process, which mediates the repression of transposable elements during meiosis by forming complexes composed of piRNAs and Piwi proteins and governs the repression of transposons. As a nuclear component, it is required for proper differentiation in the germline stem cell (GSC) lineage by repressing microRNA-7 (miR-7), thereby acting as an indirect regulator of bag-of-marbles (Bam). Acts by binding to the promoter of miR-7 gene and repressing its expression; miR-7 repression alleviates the Bam repression by miR-7, thereby allowing differentiation in the germline stem cell (GSC) lineage. This is Protein maelstrom 1 (mael1) from Drosophila ananassae (Fruit fly).